The following is a 131-amino-acid chain: SPbeta prophage-derived UPF0715 membrane protein YopD (131 aa).

4 helical membrane passes run 12-32 (VYTLAFSSLSFGLIFGLYLFV), 38-58 (AIALVTIAIIAFYALITYLVF), 75-95 (LINFLIYIAVAFSAVFLFWFV), and 108-128 (FEYYIMSIVAAFIYWFWDSIF).

It belongs to the UPF0715 family.

The protein localises to the cell membrane. The chain is SPbeta prophage-derived UPF0715 membrane protein YopD (yopD) from Bacillus subtilis (strain 168).